Reading from the N-terminus, the 387-residue chain is Exodeoxyribonuclease 7 large subunit (387 aa).

Belongs to the XseA family. Heterooligomer composed of large and small subunits.

Its subcellular location is the cytoplasm. The enzyme catalyses Exonucleolytic cleavage in either 5'- to 3'- or 3'- to 5'-direction to yield nucleoside 5'-phosphates.. In terms of biological role, bidirectionally degrades single-stranded DNA into large acid-insoluble oligonucleotides, which are then degraded further into small acid-soluble oligonucleotides. This chain is Exodeoxyribonuclease 7 large subunit, found in Synechococcus sp. (strain CC9605).